Consider the following 541-residue polypeptide: Phosphoenolpyruvate carboxykinase (ATP) (541 aa).

Positions 67, 207, and 213 each coordinate substrate. Residues Lys213, His232, and 248 to 256 contribute to the ATP site; that span reads GLSGTGKTT. The Mn(2+) site is built by Lys213 and His232. Mn(2+) is bound at residue Asp269. ATP-binding positions include Glu297, Arg333, 449–450, and Thr455; that span reads RI. Arg333 is a substrate binding site.

The protein belongs to the phosphoenolpyruvate carboxykinase (ATP) family. As to quaternary structure, monomer. Mn(2+) is required as a cofactor.

It localises to the cytoplasm. It catalyses the reaction oxaloacetate + ATP = phosphoenolpyruvate + ADP + CO2. It participates in carbohydrate biosynthesis; gluconeogenesis. Involved in the gluconeogenesis. Catalyzes the conversion of oxaloacetate (OAA) to phosphoenolpyruvate (PEP) through direct phosphoryl transfer between the nucleoside triphosphate and OAA. In Aliivibrio salmonicida (strain LFI1238) (Vibrio salmonicida (strain LFI1238)), this protein is Phosphoenolpyruvate carboxykinase (ATP).